A 317-amino-acid polypeptide reads, in one-letter code: COP9 signalosome complex subunit 6a (317 aa).

The MPN domain occupies 30-164; the sequence is TQLNPPASIC…VTIYESELHV (135 aa).

Belongs to the peptidase M67A family. CSN6 subfamily. Component of the CSN complex, probably composed of CSN1, CSN2, CSN3, CSN4, CSN5 (CSN5A or CSN5B), CSN6 (CSN6A or CSN6B), CSN7 and CSN8. Interacts with itself. In the complex, it probably interacts directly with CSN4 and CSN5A or CSN5B. Interacts with CSN7 (via C-terminal tail). Binds to the translation initiation factors TIF3E1.

Its subcellular location is the cytoplasm. It is found in the nucleus. In terms of biological role, component of the COP9 signalosome complex (CSN), a complex involved in various cellular and developmental processes such as photomorphogenesis and auxin and jasmonate responses. The CSN complex is an essential regulator of the ubiquitin (Ubl) conjugation pathway by mediating the deneddylation of the cullin subunits of SCF-type E3 ligase complexes, leading to decrease the Ubl ligase activity of SCF. It is involved in repression of photomorphogenesis in darkness by regulating the activity of COP1-containing Ubl ligase complexes. The complex is also required for degradation of PSIAA6 by regulating the activity of the Ubl ligase SCF-TIR complex. Essential for the structural integrity of the CSN holocomplex. This is COP9 signalosome complex subunit 6a from Arabidopsis thaliana (Mouse-ear cress).